The primary structure comprises 148 residues: Large ribosomal subunit protein uL15 (148 aa).

The span at 1 to 30 (MPSRLRKTRKLRGHVSHGHGRIGKHRKHPG) shows a compositional bias: basic residues. The segment at 1 to 38 (MPSRLRKTRKLRGHVSHGHGRIGKHRKHPGGRGNAGGL) is disordered. H39 is modified ((3S)-3-hydroxyhistidine). N6-acetyllysine occurs at positions 47 and 55. A Phosphoserine modification is found at S68. K110 is subject to N6-acetyllysine.

This sequence belongs to the universal ribosomal protein uL15 family. Post-translationally, hydroxylated on His-39 by MINA.

This is Large ribosomal subunit protein uL15 (RPL27A) from Pan troglodytes (Chimpanzee).